Here is a 396-residue protein sequence, read N- to C-terminus: 3-amino-4-hydroxybenzoate 2-monooxygenase PtmB3 (396 aa).

FAD-binding positions include Ala-19, 38 to 39, and Arg-112; that span reads EQ. The active-site Proton acceptor is Tyr-217. Position 295 (Asp-295) interacts with FAD. Residues 352-371 are disordered; the sequence is RERGHEFHLPDGPQQRLRDR.

This sequence belongs to the 6-hydroxynicotinate 3-monooxygenase family. Requires FAD as cofactor.

It catalyses the reaction 3-amino-4-hydroxybenzoate + NADPH + O2 + H(+) = 3-amino-2,4-dihydroxybenzoate + NADP(+) + H2O. It participates in antibiotic biosynthesis. In terms of biological role, part of a gene cluster involved in the biosynthesis of thioplatensimycin (thioPTM) and platensimycin (PTM), potent and selective inhibitors of bacterial and mammalian fatty acid synthases. Catalyzes the hydroxylation of 3-amino-4-hydroxybenzoate (3,4-AHBA) to 3-amino-2,4-dihydroxybenzoate (3,2,4-ADHBA). This Streptomyces platensis protein is 3-amino-4-hydroxybenzoate 2-monooxygenase PtmB3.